A 256-amino-acid polypeptide reads, in one-letter code: Acidic leucine-rich nuclear phosphoprotein 32 family member E (256 aa).

LRR repeat units follow at residues glutamate 43–serine 64, lysine 65–cysteine 87, and asparagine 89–glutamine 110. Residues cysteine 123–aspartate 161 enclose the LRRCT domain. Residues glycine 147 to aspartate 256 are disordered. Acidic residues-rich tracts occupy residues phenylalanine 148–valine 205 and isoleucine 215–alanine 235. Residues glutamate 204–aspartate 256 form a ZID domain region. The span at glutamate 236–proline 247 shows a compositional bias: basic and acidic residues.

It belongs to the ANP32 family. Component of a SWR1-like complex. Interacts with H2A.Z/H2AZ1.

The protein localises to the cytoplasm. The protein resides in the nucleus. Its function is as follows. Histone chaperone that specifically mediates the genome-wide removal of histone H2A.Z/H2AZ1 from the nucleosome: removes H2A.Z/H2AZ1 from its normal sites of deposition, especially from enhancer and insulator regions. Not involved in deposition of H2A.Z/H2AZ1 in the nucleosome. May stabilize the evicted H2A.Z/H2AZ1-H2B dimer, thus shifting the equilibrium towards dissociation and the off-chromatin state. Inhibits activity of protein phosphatase 2A (PP2A). Does not inhibit protein phosphatase 1. May play a role in cerebellar development and synaptogenesis. The chain is Acidic leucine-rich nuclear phosphoprotein 32 family member E (ANP32E) from Gallus gallus (Chicken).